The chain runs to 500 residues: NAD(P)H-quinone oxidoreductase chain 4, chloroplastic (500 aa).

The next 14 helical transmembrane spans lie at 4 to 24, 37 to 57, 84 to 104, 111 to 129, 134 to 154, 167 to 187, 208 to 228, 242 to 262, 272 to 292, 305 to 325, 330 to 350, 374 to 396, 411 to 431, and 462 to 482; these read FPWL…IFFL, ICIC…HFQL, GLSI…TLAA, SRLF…IGSF, LLLF…LLSM, FILY…GMGL, ALEI…SPII, HYST…YGLV, AHSI…IYAA, IAYS…SITD, GAIL…FLAG, IFTM…GFVA, FFMP…LTPI, and LFVS…PDFV.

It belongs to the complex I subunit 4 family.

Its subcellular location is the plastid. It is found in the chloroplast thylakoid membrane. The catalysed reaction is a plastoquinone + NADH + (n+1) H(+)(in) = a plastoquinol + NAD(+) + n H(+)(out). The enzyme catalyses a plastoquinone + NADPH + (n+1) H(+)(in) = a plastoquinol + NADP(+) + n H(+)(out). This Chloranthus spicatus (Chulantree) protein is NAD(P)H-quinone oxidoreductase chain 4, chloroplastic.